The primary structure comprises 1021 residues: 2-oxoglutarate dehydrogenase complex component E1 (1021 aa).

A mitochondrion-targeting transit peptide spans 1–40 (MFNLRTCASKLRPLTASQTIRSLKHNRPAAPRTFQQFRCL). Histidine 142, aspartate 155, and aspartate 157 together coordinate Ca(2+). Thiamine diphosphate-binding residues include arginine 311, aspartate 410, asparagine 443, and isoleucine 445. Residues aspartate 410, asparagine 443, and isoleucine 445 each contribute to the Mg(2+) site. Lysine 533 participates in a covalent cross-link: Glycyl lysine isopeptide (Lys-Gly) (interchain with G-Cter in ubiquitin). Glutamine 675 lines the thiamine diphosphate pocket.

The protein belongs to the alpha-ketoglutarate dehydrogenase family. Homodimer. The 2-oxoglutarate dehydrogenase complex is composed of OGDH (2-oxoglutarate dehydrogenase; E1), DLST (dihydrolipoamide succinyltransferase; E2) and DLD (dihydrolipoamide dehydrogenase; E3). It contains multiple copies of the three enzymatic components (E1, E2 and E3). In the nucleus, the 2-oxoglutarate dehydrogenase complex associates with kat2a. It depends on thiamine diphosphate as a cofactor. Requires Mg(2+) as cofactor. As to expression, expressed in the brain.

The protein localises to the mitochondrion. It localises to the nucleus. It catalyses the reaction N(6)-[(R)-lipoyl]-L-lysyl-[protein] + 2-oxoglutarate + H(+) = N(6)-[(R)-S(8)-succinyldihydrolipoyl]-L-lysyl-[protein] + CO2. With respect to regulation, calcium ions and ADP stimulate, whereas ATP and NADH reduce catalytic activity. 2-oxoglutarate dehydrogenase (E1o) component of the 2-oxoglutarate dehydrogenase complex (OGDHC). Participates in the first step, rate limiting for the overall conversion of 2-oxoglutarate to succinyl-CoA and CO(2) catalyzed by the whole OGDHC. Catalyzes the irreversible decarboxylation of 2-oxoglutarate (alpha-ketoglutarate) via the thiamine diphosphate (ThDP) cofactor and subsequent transfer of the decarboxylated acyl intermediate on an oxidized dihydrolipoyl group that is covalently amidated to the E2 enzyme (dihydrolipoyllysine-residue succinyltransferase or DLST). Plays a key role in the Krebs (citric acid) cycle, which is a common pathway for oxidation of fuel molecules, including carbohydrates, fatty acids, and amino acids. Can catalyze the decarboxylation of 2-oxoadipate in vitro, but at a much lower rate than 2-oxoglutarate. Mainly active in the mitochondrion. A fraction of the 2-oxoglutarate dehydrogenase complex also localizes in the nucleus and is required for lysine succinylation of histones: associates with KAT2A on chromatin and provides succinyl-CoA to histone succinyltransferase KAT2A. The chain is 2-oxoglutarate dehydrogenase complex component E1 (ogdh) from Xenopus laevis (African clawed frog).